The primary structure comprises 37 residues: M-oxotoxin-Ot2c (37 aa).

Expressed by the venom gland.

Its subcellular location is the secreted. Functionally, disrupts biological membranes, particularly those rich in phosphocholine. Has antimicrobial activity against Gram-negative bacterium E.coli, Gram-positive bacteria B.subtilis and S.aureus, and hemolytic activity against sheep, pig and guinea pig red blood cells. Has insecticidal activity against S.frugiperda ovarian cells by opening non-selective ion channels. Enhances the insecticidal activity of spider venom neurotoxic peptides. The protein is M-oxotoxin-Ot2c of Oxyopes takobius (Lynx spider).